The following is a 330-amino-acid chain: MISFSSFYQQIADSNLQHWLETLPAILGKWQREHKHGNLPKWEKVLNKLHYPAPDRVDFVSSVTVGTGEQLTPGEKEKLENLLRLFMPWRKGPFHIHGIHIDTEWRSDWKWDRVSPHISPLQNRTVLDVGCGSGYHMWRMLGAGAKRVVGIDPSPLFLCQFEAVKRLSGENHPVHLLPLGIEELPPLDAFDTVFSMGVLYHRRSPIDHLLQLRDQLRMGGELVLETLVIDGDENAVLVPQDRYGKMNNVWFIPSVAALMLWLKKCDFTDIRCVDTDVTALAEQRRTDWMPNESLVEYLDPNDITKTIEGYPAPKRATIIAVKNQPNQDLT.

Carboxy-S-adenosyl-L-methionine contacts are provided by residues Lys-91, Trp-105, Lys-110, Gly-130, 152-154 (DPS), 181-182 (IE), Met-196, Tyr-200, and Arg-315.

This sequence belongs to the class I-like SAM-binding methyltransferase superfamily. CmoB family. In terms of assembly, homotetramer.

The enzyme catalyses carboxy-S-adenosyl-L-methionine + 5-hydroxyuridine(34) in tRNA = 5-carboxymethoxyuridine(34) in tRNA + S-adenosyl-L-homocysteine + H(+). In terms of biological role, catalyzes carboxymethyl transfer from carboxy-S-adenosyl-L-methionine (Cx-SAM) to 5-hydroxyuridine (ho5U) to form 5-carboxymethoxyuridine (cmo5U) at position 34 in tRNAs. The chain is tRNA U34 carboxymethyltransferase from Shewanella sp. (strain ANA-3).